A 444-amino-acid chain; its full sequence is Protein CLP1 homolog (444 aa).

ATP contacts are provided by residues Glu33, Lys72, and 140–145 (DSGKST).

The protein belongs to the Clp1 family. Clp1 subfamily. In terms of assembly, interacts with PCFS4 and SYM5. Forms a complex with cleavage and polyadenylation specificity factor (CPSF) subunits CPSF30, CPSF100, PCFS1, PCFS4, PCFS5, CPSF160 and FY.

Its subcellular location is the nucleus. Its function is as follows. Required for endonucleolytic cleavage during polyadenylation-dependent pre-mRNA 3'-end formation. Functions in gametophyte, embryo and postembryotic development. The chain is Protein CLP1 homolog (CLPS3) from Arabidopsis thaliana (Mouse-ear cress).